Consider the following 344-residue polypeptide: Heat-inducible transcription repressor HrcA (344 aa).

Belongs to the HrcA family.

Functionally, negative regulator of class I heat shock genes (grpE-dnaK-dnaJ and groELS operons). Prevents heat-shock induction of these operons. The chain is Heat-inducible transcription repressor HrcA from Streptococcus equi subsp. equi (strain 4047).